The primary structure comprises 170 residues: UPF0251 protein MA_1017 (170 aa).

This sequence belongs to the UPF0251 family.

In Methanosarcina acetivorans (strain ATCC 35395 / DSM 2834 / JCM 12185 / C2A), this protein is UPF0251 protein MA_1017.